A 20-amino-acid chain; its full sequence is RGSNLTTHPLRNIKDLVVYM.

Residue Asn4 is glycosylated (N-linked (GlcNAc...) asparagine).

Belongs to the peptidase A1 family. Chorionic epithelium (trophectoderm) and placental cotyledons.

The protein localises to the secreted. It localises to the extracellular space. In Bison bonasus (European bison), this protein is Pregnancy-associated glycoprotein 60H.